Here is a 233-residue protein sequence, read N- to C-terminus: Small ribosomal subunit protein uS3 (233 aa).

The KH type-2 domain maps to 39–107 (IRAFLKRKLY…DVNINIKEER (69 aa)). The span at 212-222 (MQPEKTEESAP) shows a compositional bias: basic and acidic residues. The disordered stretch occupies residues 212–233 (MQPEKTEESAPAKKPRRTRRGK). Positions 224–233 (KKPRRTRRGK) are enriched in basic residues.

It belongs to the universal ribosomal protein uS3 family. As to quaternary structure, part of the 30S ribosomal subunit. Forms a tight complex with proteins S10 and S14.

Functionally, binds the lower part of the 30S subunit head. Binds mRNA in the 70S ribosome, positioning it for translation. The chain is Small ribosomal subunit protein uS3 from Campylobacter jejuni subsp. jejuni serotype O:6 (strain 81116 / NCTC 11828).